The chain runs to 89 residues: Small ribosomal subunit protein uS17 (89 aa).

The protein belongs to the universal ribosomal protein uS17 family. Part of the 30S ribosomal subunit.

Functionally, one of the primary rRNA binding proteins, it binds specifically to the 5'-end of 16S ribosomal RNA. The polypeptide is Small ribosomal subunit protein uS17 (Chlorobium phaeobacteroides (strain BS1)).